The primary structure comprises 498 residues: ATP synthase subunit beta, chloroplastic (498 aa).

172–179 is a binding site for ATP; sequence GGAGVGKT.

It belongs to the ATPase alpha/beta chains family. F-type ATPases have 2 components, CF(1) - the catalytic core - and CF(0) - the membrane proton channel. CF(1) has five subunits: alpha(3), beta(3), gamma(1), delta(1), epsilon(1). CF(0) has four main subunits: a(1), b(1), b'(1) and c(9-12).

It is found in the plastid. Its subcellular location is the chloroplast thylakoid membrane. It carries out the reaction ATP + H2O + 4 H(+)(in) = ADP + phosphate + 5 H(+)(out). In terms of biological role, produces ATP from ADP in the presence of a proton gradient across the membrane. The catalytic sites are hosted primarily by the beta subunits. This chain is ATP synthase subunit beta, chloroplastic, found in Saruma henryi (Upright wild ginger).